The sequence spans 520 residues: DEP domain-containing protein 7 (520 aa).

Positions A45–N137 constitute a DEP domain. Residues K148 to P167 are disordered.

The protein belongs to the DEPDC7 family.

This Xenopus tropicalis (Western clawed frog) protein is DEP domain-containing protein 7 (depdc7).